The sequence spans 467 residues: DEAD-box ATP-dependent RNA helicase CshA (467 aa).

The short motif at 2 to 30 (TTFQELGLSQEVMKAIERMGFEETTPIQA) is the Q motif element. One can recognise a Helicase ATP-binding domain in the interval 33–203 (IPLSLQNKDV…ERFMNEPELV (171 aa)). 46-53 (AQTGTGKT) lines the ATP pocket. The short motif at 151–154 (DEAD) is the DEAD box element. The region spanning 214 to 374 (NIQQYYLEVH…RMKPPTLDEA (161 aa)) is the Helicase C-terminal domain. The segment at 428-467 (TTPVQLTEEPPLAVKREKKRGGRPDGSARSRTKKRRITAH) is disordered. Over residues 457–467 (SRTKKRRITAH) the composition is skewed to basic residues.

The protein belongs to the DEAD box helicase family. CshA subfamily. In terms of assembly, oligomerizes, may be a member of the RNA degradosome.

The protein localises to the cytoplasm. The enzyme catalyses ATP + H2O = ADP + phosphate + H(+). Functionally, DEAD-box RNA helicase possibly involved in RNA degradation. Unwinds dsRNA in both 5'- and 3'-directions, has RNA-dependent ATPase activity. The chain is DEAD-box ATP-dependent RNA helicase CshA from Geobacillus kaustophilus (strain HTA426).